The primary structure comprises 510 residues: MRLTYLPLFAGIAIQSASALPDFFKSSVLKPRRTNSLLINPDAQPDLPTAQQASTAAASVGLNLTDIQGDILIGMKKNKEMFFFFSIADATAFKSHLDSAILPLITSTQQLLTVATQPTTAVNLAFSQTGLNALGLASQGLGDSLFASGQFSGAESLGDPGTSNWVQAFAGTGIHGVFLLASDTIDNVNAELSQIQSILGTSITEAYRLQGEARPDDQQGHEHFGFMDGISNPAIDGFSTALPGQAVLSPGLFLLAEDGDGSSSSRPSWAKDGSLLAFRQLQQRVPEFNKFLADNAALTQGNADLLGARMMGRWKSGAPVDLAPTADDVDLANDPQRNNNFNFTHPDFTETTDQTHCPFSAHIRKTNPRSDFNPLNTANHIIRAGIPYGPEVTDAEASSNTSSTDASLERGLAFVAYQSNIGNGFAFIQQNWVDNANFFFGKTTPPGIDPIIGSNAAQNNFAPNSPRPVSGLDPTDSTTIVTLNTDFVVSRGGEYFFSPSLSAIQNTLSV.

The first 19 residues, 1–19 (MRLTYLPLFAGIAIQSASA), serve as a signal peptide directing secretion. Residues 20–58 (LPDFFKSSVLKPRRTNSLLINPDAQPDLPTAQQASTAAA) constitute a propeptide that is removed on maturation. Catalysis depends on D228, which acts as the Proton acceptor. H362 serves as a coordination point for heme.

In terms of assembly, homodimer. Requires heme b as cofactor.

Functionally, peroxidase capable of degrading beta-carotene. This Mycetinis scorodonius (Garlic mushroom) protein is Peroxidase 2.